The chain runs to 153 residues: Insulin-like growth factor 1 (153 aa).

The b stretch occupies residues 49–77 (GPETLCGAELVDALQFVCGDRGFYFNKPT). Disulfide bonds link cysteine 54–cysteine 96, cysteine 66–cysteine 109, and cysteine 95–cysteine 100. Positions 78–89 (GYGSSSRRAPQT) are c. Residues 90–110 (GIVDECCFRSCDLRRLEMYCA) form an a region. Positions 111 to 118 (PLKPAKSA) are d. Positions 119 to 153 (RSVRAQRHTDMPKAQKEVHLKNASRGSAGNKNYRM) are cleaved as a propeptide — e peptide. The interval 120 to 153 (SVRAQRHTDMPKAQKEVHLKNASRGSAGNKNYRM) is disordered. The segment covering 125–138 (RHTDMPKAQKEVHL) has biased composition (basic and acidic residues). Positions 142-153 (SRGSAGNKNYRM) are enriched in polar residues.

Belongs to the insulin family. Forms a ternary complex with IGFR1 and ITGAV:ITGB3. Forms a ternary complex with IGFR1 and ITGA6:ITGB4. Forms a ternary complex with IGFBP3 and ALS.

It localises to the secreted. Functionally, the insulin-like growth factors, isolated from plasma, are structurally and functionally related to insulin but have a much higher growth-promoting activity. May be a physiological regulator of [1-14C]-2-deoxy-D-glucose (2DG) transport and glycogen synthesis in osteoblasts. Stimulates glucose transport in bone-derived osteoblastic (PyMS) cells and is effective at much lower concentrations than insulin, not only regarding glycogen and DNA synthesis but also with regard to enhancing glucose uptake. May play a role in synapse maturation. Ca(2+)-dependent exocytosis of IGF1 is required for sensory perception of smell in the olfactory bulb. Acts as a ligand for IGF1R. Binds to the alpha subunit of IGF1R, leading to the activation of the intrinsic tyrosine kinase activity which autophosphorylates tyrosine residues in the beta subunit thus initiating a cascade of down-stream signaling events leading to activation of the PI3K-AKT/PKB and the Ras-MAPK pathways. Binds to integrins ITGAV:ITGB3 and ITGA6:ITGB4. Its binding to integrins and subsequent ternary complex formation with integrins and IGFR1 are essential for IGF1 signaling. Induces the phosphorylation and activation of IGFR1, MAPK3/ERK1, MAPK1/ERK2 and AKT1. As part of the MAPK/ERK signaling pathway, acts as a negative regulator of apoptosis in cardiomyocytes via promotion of STUB1/CHIP-mediated ubiquitination and degradation of ICER-type isoforms of CREM. This chain is Insulin-like growth factor 1, found in Panthera tigris altaica (Siberian tiger).